The sequence spans 182 residues: RFKKIRRLGALPGLTSKRPRSGSDLKNQLRSGKRSQYRIRLEEKQKLRFHYGLTERQLLKYVHIAGKAKGSTGQVLLQLLEMRLDNILFRLGMASTIPGARQLVNHRHILVNGRIVDIPSYRCKPRDIITTKDKERSKVLIQNYIASSPHEELPNHLTIDPLQYKGLVNQIIDSKWVGLKIN.

The region spanning 82-143 is the S4 RNA-binding domain; the sequence is MRLDNILFRL…KERSKVLIQN (62 aa).

Belongs to the universal ribosomal protein uS4 family. As to quaternary structure, part of the 30S ribosomal subunit. Contacts protein S5. The interaction surface between S4 and S5 is involved in control of translational fidelity.

The protein resides in the plastid. Its subcellular location is the chloroplast. One of the primary rRNA binding proteins, it binds directly to 16S rRNA where it nucleates assembly of the body of the 30S subunit. Functionally, with S5 and S12 plays an important role in translational accuracy. The chain is Small ribosomal subunit protein uS4c (rps4) from Neomarica sp. (strain Lejeune 1997).